A 363-amino-acid polypeptide reads, in one-letter code: Aminomethyltransferase (363 aa).

This sequence belongs to the GcvT family. As to quaternary structure, the glycine cleavage system is composed of four proteins: P, T, L and H.

The enzyme catalyses N(6)-[(R)-S(8)-aminomethyldihydrolipoyl]-L-lysyl-[protein] + (6S)-5,6,7,8-tetrahydrofolate = N(6)-[(R)-dihydrolipoyl]-L-lysyl-[protein] + (6R)-5,10-methylene-5,6,7,8-tetrahydrofolate + NH4(+). Its function is as follows. The glycine cleavage system catalyzes the degradation of glycine. This is Aminomethyltransferase from Staphylococcus aureus (strain MRSA252).